The sequence spans 335 residues: Glyceraldehyde-3-phosphate dehydrogenase (335 aa).

NAD(+) is bound by residues 11-12 (RI), aspartate 33, and lysine 78. D-glyceraldehyde 3-phosphate-binding positions include 148–150 (SST), threonine 179, 208–209 (TG), and arginine 231. Residue asparagine 313 coordinates NAD(+).

This sequence belongs to the glyceraldehyde-3-phosphate dehydrogenase family. As to quaternary structure, homotetramer.

The protein localises to the cytoplasm. It carries out the reaction D-glyceraldehyde 3-phosphate + phosphate + NAD(+) = (2R)-3-phospho-glyceroyl phosphate + NADH + H(+). It participates in carbohydrate degradation; glycolysis; pyruvate from D-glyceraldehyde 3-phosphate: step 1/5. The chain is Glyceraldehyde-3-phosphate dehydrogenase (GPD) from Pleurotus sajor-caju (Oyster mushroom).